Consider the following 635-residue polypeptide: Signal recognition particle subunit SRP72 (635 aa).

TPR repeat units follow at residues 7–42 (GGLY…YPKE), 75–105 (GHVG…DKDD), 106–139 (VKAL…HSDD), 171–204 (YSQL…CRKS), 220–253 (DSIR…NHPD), 255–290 (SVKA…DQTK), and 436–469 (VEVE…QCRL). Residues 539–635 (KRKRKIRLPK…QKKKKNASKF (97 aa)) form a disordered region. Positions 557 to 569 (DPERWLPRQERST) are enriched in basic and acidic residues. Residues 625–635 (KQKKKKNASKF) show a composition bias toward basic residues.

This sequence belongs to the SRP72 family. In terms of assembly, heterodimer with srpa-68. Srpa-68-srpa-72 heterodimer formation is stabilized by the presence of 7SL RNA. Component of a signal recognition particle (SRP) complex that consists of a 7SL RNA molecule of 300 nucleotides and six protein subunits: srpa-72, srpa-68, SRP54, F37F2.2/SRP19, F25G6.8/SRP14 and ZK512.4/SRP9. Within the SRP complex, interacts (via N-terminus) with srpa-68 (via C-terminus).

The protein localises to the cytoplasm. The protein resides in the endoplasmic reticulum. Component of the signal recognition particle (SRP) complex, a ribonucleoprotein complex that mediates the cotranslational targeting of secretory and membrane proteins to the endoplasmic reticulum (ER). The SRP complex interacts with the signal sequence in nascent secretory and membrane proteins and directs them to the membrane of the ER. The SRP complex targets the ribosome-nascent chain complex to the SRP receptor (SR), which is anchored in the ER, where SR compaction and GTPase rearrangement drive cotranslational protein translocation into the ER. Binds the signal recognition particle RNA (7SL RNA) in presence of srpa-68. Can bind 7SL RNA with low affinity. The SRP complex possibly participates in the elongation arrest function. The protein is Signal recognition particle subunit SRP72 of Caenorhabditis elegans.